Consider the following 376-residue polypeptide: Histidinol-phosphate aminotransferase 1 (376 aa).

An N6-(pyridoxal phosphate)lysine modification is found at lysine 235.

This sequence belongs to the class-II pyridoxal-phosphate-dependent aminotransferase family. Histidinol-phosphate aminotransferase subfamily. Homodimer. It depends on pyridoxal 5'-phosphate as a cofactor.

It carries out the reaction L-histidinol phosphate + 2-oxoglutarate = 3-(imidazol-4-yl)-2-oxopropyl phosphate + L-glutamate. It participates in amino-acid biosynthesis; L-histidine biosynthesis; L-histidine from 5-phospho-alpha-D-ribose 1-diphosphate: step 7/9. This chain is Histidinol-phosphate aminotransferase 1, found in Cupriavidus pinatubonensis (strain JMP 134 / LMG 1197) (Cupriavidus necator (strain JMP 134)).